A 470-amino-acid polypeptide reads, in one-letter code: Probable glycosyltransferase At3g07620 (470 aa).

Over 1–7 the chain is Cytoplasmic; sequence MRDYIPK. A helical; Signal-anchor transmembrane segment spans residues 8 to 28; that stretch reads YLNAFLLAFATFAVGFAIFIA. The Lumenal portion of the chain corresponds to 29-470; it reads KDSNSSSHLY…WLRRLNVKLL (442 aa). N-linked (GlcNAc...) asparagine glycans are attached at residues asparagine 32, asparagine 73, asparagine 105, asparagine 236, asparagine 274, and asparagine 299.

Belongs to the glycosyltransferase 47 family.

The protein resides in the golgi apparatus membrane. Its function is as follows. May be involved in cell wall biosynthesis. The sequence is that of Probable glycosyltransferase At3g07620 from Arabidopsis thaliana (Mouse-ear cress).